The following is a 170-amino-acid chain: Large ribosomal subunit protein uL10 (170 aa).

This sequence belongs to the universal ribosomal protein uL10 family. Part of the ribosomal stalk of the 50S ribosomal subunit. The N-terminus interacts with L11 and the large rRNA to form the base of the stalk. The C-terminus forms an elongated spine to which L12 dimers bind in a sequential fashion forming a multimeric L10(L12)X complex.

Forms part of the ribosomal stalk, playing a central role in the interaction of the ribosome with GTP-bound translation factors. This chain is Large ribosomal subunit protein uL10, found in Jannaschia sp. (strain CCS1).